Consider the following 317-residue polypeptide: Tetraspanin-15 (317 aa).

The segment at 1–43 (MADNAQVVPVEEPAATATATATATATTEPEAKSSDQMESQSDN) is disordered. At 1-60 (MADNAQVVPVEEPAATATATATATATTEPEAKSSDQMESQSDNKPPMGTLMALVNILAAG) the chain is on the cytoplasmic side. Over residues 7-28 (VVPVEEPAATATATATATATTE) the composition is skewed to low complexity. A helical membrane pass occupies residues 61 to 81 (VLPIFTFVLSLTLLGYAVWLL). The Extracellular segment spans residues 82 to 96 (YMRSYDCEDILGLPR). A helical membrane pass occupies residues 97–117 (VQTLASVGLLAVFVVSNAALF). Over 118 to 126 (LRRKFPMPA) the chain is Cytoplasmic. The chain crosses the membrane as a helical span at residues 127 to 147 (LVVMVVVLLLMLFIGLAYAGV). Topologically, residues 148–287 (NEMQSRRFPA…IRSVRRKWWQ (140 aa)) are extracellular. Asn224 carries N-linked (GlcNAc...) asparagine glycosylation. A helical transmembrane segment spans residues 288-308 (LGIFLIVISILLLMSHLLIFL). Topologically, residues 309-317 (ATFWERFKG) are cytoplasmic.

This sequence belongs to the tetraspanin (TM4SF) family.

Its subcellular location is the membrane. In terms of biological role, may be involved in the regulation of cell differentiation. This is Tetraspanin-15 (TET15) from Arabidopsis thaliana (Mouse-ear cress).